We begin with the raw amino-acid sequence, 246 residues long: Aquaporin AqpM (246 aa).

At 1-11 the chain is on the cytoplasmic side; sequence MVSLTKRCIAE. The chain crosses the membrane as a helical span at residues 12 to 32; that stretch reads FIGTFFLVFFGAGAAAITLMI. Residues 33 to 45 lie on the Extracellular side of the membrane; that stretch reads ASGGTAPNPFNIG. The chain crosses the membrane as a helical span at residues 46–66; it reads IGLLGGLGDWVAIGLAFGFAI. Over 67 to 69 the chain is Cytoplasmic; that stretch reads AAS. A helical transmembrane segment spans residues 70–90; sequence IYALGNISGCHINPAVTIGLW. The NPA 1 signature appears at 82-84; sequence NPA. The Extracellular portion of the chain corresponds to 91–103; the sequence is SVKKFPGRDVVPY. The chain crosses the membrane as a helical span at residues 104 to 124; that stretch reads IIAQLLGAAFASFIFLQCAGI. Topologically, residues 125–145 are cytoplasmic; that stretch reads TAATIGGLGATAPFPGIGYWQ. The helical transmembrane segment at 146-166 threads the bilayer; sequence AMLAETVGTFLLMITIMGIAV. Over 167–172 the chain is Extracellular; the sequence is DERAPK. Residues 173–193 traverse the membrane as a helical segment; the sequence is GFAGIIIGLTVAGIITTIGNI. Residues 194–217 lie on the Cytoplasmic side of the membrane; it reads TGSSLNPARTFGPYLNDMVFAGTN. The NPA 2 motif lies at 199 to 201; it reads NPA. A helical membrane pass occupies residues 218-238; the sequence is LWNYFPIYVIGPVVGAVLAAL. Over 239 to 246 the chain is Extracellular; the sequence is TYQYLTSE.

It belongs to the MIP/aquaporin (TC 1.A.8) family. Homotetramer.

Its subcellular location is the cell membrane. In terms of biological role, channel that permits osmotically driven movement of water in both directions. It mediates rapid entry or exit of water in response to abrupt changes in osmolarity. Also exhibits a transient but reproducible increase in the initial glycerol flux. The protein is Aquaporin AqpM (aqpM) of Methanothermobacter thermautotrophicus (strain ATCC 29096 / DSM 1053 / JCM 10044 / NBRC 100330 / Delta H) (Methanobacterium thermoautotrophicum).